The following is a 269-amino-acid chain: uncharacterized protein (269 aa).

The tract at residues 1-21 (MAYSSSNSDIEDDSSKSNSNL) is disordered.

This is an uncharacterized protein from Homo sapiens (Human).